A 226-amino-acid chain; its full sequence is MKAVVLLSGGMDSLVTTAIANAQGFELAAMHVNYGQRTWHKELEAFRLIADHYAIGERLEINADYLAQIGGSSLTDYSMPISGADLQGLSIPTSYVPFRNAGFLSMAVSWAEVIGAERIFIGAVEEDSSGYPDCRKVFYDAFNAVIALGTKPETSIAIMTPLIEMQKSEIVRKGMELTAPFELSWSCYKSEGKACGVCDSCALRLRAFERAGMRDPIDYEQRPDYI.

Leu7–Thr17 is an ATP binding site. Cys187, Cys195, Cys198, and Cys201 together coordinate Zn(2+).

Belongs to the QueC family. Requires Zn(2+) as cofactor.

It catalyses the reaction 7-carboxy-7-deazaguanine + NH4(+) + ATP = 7-cyano-7-deazaguanine + ADP + phosphate + H2O + H(+). It participates in purine metabolism; 7-cyano-7-deazaguanine biosynthesis. Catalyzes the ATP-dependent conversion of 7-carboxy-7-deazaguanine (CDG) to 7-cyano-7-deazaguanine (preQ(0)). This Chlorobium phaeobacteroides (strain DSM 266 / SMG 266 / 2430) protein is 7-cyano-7-deazaguanine synthase.